Consider the following 205-residue polypeptide: Methylamine utilization protein MauD (205 aa).

A helical transmembrane segment spans residues 5-25; that stretch reads IMIASNVLLWGAFLALAALML. A Thioredoxin domain is found at 50–184; that stretch reads PDIGERSPVF…VESLFETTRV (135 aa).

Its subcellular location is the membrane. Its pathway is one-carbon metabolism; methylamine degradation. In terms of biological role, may be specifically involved in the processing, transport, and/or maturation of the MADH beta-subunit. The polypeptide is Methylamine utilization protein MauD (mauD) (Methylobacillus flagellatus (strain ATCC 51484 / DSM 6875 / VKM B-1610 / KT)).